The primary structure comprises 394 residues: Elongation factor Tu 1 (394 aa).

The 195-residue stretch at 10 to 204 (KPHVNVGTIG…ALDTYIPEPA (195 aa)) folds into the tr-type G domain. Residues 19 to 26 (GHVDHGKT) form a G1 region. GTP is bound at residue 19 to 26 (GHVDHGKT). Position 26 (T26) interacts with Mg(2+). The segment at 60-64 (GITIN) is G2. Residues 81–84 (DCPG) are G3. GTP is bound by residues 81-85 (DCPGH) and 136-139 (NKCD). Residues 136 to 139 (NKCD) are G4. Positions 174-176 (SAL) are G5.

Belongs to the TRAFAC class translation factor GTPase superfamily. Classic translation factor GTPase family. EF-Tu/EF-1A subfamily. Monomer.

The protein resides in the cytoplasm. It carries out the reaction GTP + H2O = GDP + phosphate + H(+). Functionally, GTP hydrolase that promotes the GTP-dependent binding of aminoacyl-tRNA to the A-site of ribosomes during protein biosynthesis. The chain is Elongation factor Tu 1 from Shewanella frigidimarina (strain NCIMB 400).